A 436-amino-acid chain; its full sequence is GTPase Der (436 aa).

EngA-type G domains are found at residues 4–167 and 175–351; these read PVIA…PTDL and IKFS…ENQN. GTP is bound by residues 10–17, 57–61, 119–122, 181–188, 229–233, and 294–297; these read GRPNVGKS, DTGGI, NKAD, DTAGI, and NKWD. The 85-residue stretch at 352–436 folds into the KH-like domain; the sequence is RRIQSALLND…PIHLIPRQRK (85 aa).

This sequence belongs to the TRAFAC class TrmE-Era-EngA-EngB-Septin-like GTPase superfamily. EngA (Der) GTPase family. Associates with the 50S ribosomal subunit.

In terms of biological role, GTPase that plays an essential role in the late steps of ribosome biogenesis. This chain is GTPase Der, found in Latilactobacillus sakei subsp. sakei (strain 23K) (Lactobacillus sakei subsp. sakei).